The chain runs to 495 residues: UDP-glycosyltransferase 71B7 (495 aa).

UDP-alpha-D-glucose is bound by residues S284, 351-353 (APQ), 368-376 (HCGWNSTLE), and 390-393 (YAEQ).

Belongs to the UDP-glycosyltransferase family.

The sequence is that of UDP-glycosyltransferase 71B7 (UGT71B7) from Arabidopsis thaliana (Mouse-ear cress).